The sequence spans 666 residues: Probable cytochrome c oxidase subunit 1 (666 aa).

2 helical membrane passes run 16–36 (IPLIAGAVVLVAILAVLVWVV) and 57–77 (IGVMYILLASIMLLRGGSDAI). Histidine 105 serves as a coordination point for heme b. The next 13 helical transmembrane spans lie at 108–128 (IMIFFVAMPFVIGLMNLVVPL), 142–162 (SVGFWLTATGALLVNLSLVIG), 192–212 (SLQISGVGTLVAGINLVTTVL), 234–254 (SNLLIVAAFPILTATLAMLLL), 277–297 (LIWAWGHPEVYILVLPAFGIF), 315–335 (MVLATMAICVISFMVWLHHFF), 346–366 (IFGIASMIIAVPTGVKIYNWL), 380–400 (MLWAVGFMVTFIIGGLTGVLV), 413–433 (MFLVAHFHNVIIGGVLFGAFA), 456–476 (FWFTFLGFYVTFMPLYIAGML), 493–513 (WMLVAAAGMAVLTIGVICQIM), 591–611 (SPTGFICAFFATIMGFALIWH), and 612–632 (IWWMVILGGIGAFATFVVFAW). Residues histidine 283, tyrosine 287, histidine 332, and histidine 333 each contribute to the Cu cation site. The 1'-histidyl-3'-tyrosine (His-Tyr) cross-link spans 283–287 (HPEVY). Heme b contacts are provided by histidine 418 and histidine 420.

Belongs to the heme-copper respiratory oxidase family.

It is found in the cell membrane. The catalysed reaction is 4 Fe(II)-[cytochrome c] + O2 + 8 H(+)(in) = 4 Fe(III)-[cytochrome c] + 2 H2O + 4 H(+)(out). Its pathway is energy metabolism; oxidative phosphorylation. This Bradyrhizobium diazoefficiens (strain JCM 10833 / BCRC 13528 / IAM 13628 / NBRC 14792 / USDA 110) protein is Probable cytochrome c oxidase subunit 1.